Here is a 472-residue protein sequence, read N- to C-terminus: Eukaryotic translation initiation factor 2 subunit 3, X-linked (472 aa).

At alanine 2 the chain carries N-acetylalanine. Residue serine 16 is modified to Phosphoserine. In terms of domain architecture, tr-type G spans glutamine 39–arginine 248. The tract at residues glycine 48–serine 55 is G1. Alanine 51–threonine 56 is a binding site for GTP. Residues asparagine 76–lysine 80 are G2. The interval aspartate 134–glycine 137 is G3. Residues asparagine 190 to aspartate 193 and serine 225 to glutamine 227 each bind GTP. The tract at residues asparagine 190–aspartate 193 is G4. A G5 region spans residues serine 225–glutamine 227. Residues glycine 457–valine 469 are interacts with Cdc123.

It belongs to the TRAFAC class translation factor GTPase superfamily. Classic translation factor GTPase family. EIF2G subfamily. In terms of assembly, eukaryotic translation initiation factor 2 eIF2 is a heterotrimeric complex composed of an alpha (EIF2S1), a beta (EIF2S2) and a gamma (EIF2S3) chain. eIF2 is member of the 43S pre-initiation complex (43S PIC). Interacts (via C-terminus) with CDC123; the interaction is direct. In terms of tissue distribution, widely expressed.

The protein localises to the cytoplasm. Its subcellular location is the cytosol. The enzyme catalyses GTP + H2O = GDP + phosphate + H(+). In terms of biological role, member of the eIF2 complex that functions in the early steps of protein synthesis by forming a ternary complex with GTP and initiator tRNA. This complex binds to a 40S ribosomal subunit, followed by mRNA binding to form the 43S pre-initiation complex (43S PIC). Junction of the 60S ribosomal subunit to form the 80S initiation complex is preceded by hydrolysis of the GTP bound to eIF2 and release of an eIF2-GDP binary complex. In order for eIF2 to recycle and catalyze another round of initiation, the GDP bound to eIF2 must exchange with GTP by way of a reaction catalyzed by eIF-2B. Along with its paralog on chromosome Y, may contribute to spermatogenesis up to the round spermatid stage. This is Eukaryotic translation initiation factor 2 subunit 3, X-linked (Eif2s3) from Rattus norvegicus (Rat).